The sequence spans 304 residues: Putative AraC-like transcription regulator (304 aa).

An HTH araC/xylS-type domain is found at 202–300; that stretch reads ATALTCLHRD…GMPPGDYRKH (99 aa). 2 DNA-binding regions (H-T-H motif) span residues 219–240 and 267–290; these read ADLA…KATV and LASI…KRVL.

The protein is Putative AraC-like transcription regulator of Streptomyces lividans.